The following is a 311-amino-acid chain: Salutaridine reductase (311 aa).

Residues 21–24, Arg44, 70–71, and Asn98 each bind NADP(+); these read NKGI and DV. Substrate contacts are provided by Tyr129 and Ser180. NADP(+) is bound by residues Tyr236, Lys240, and 267–272; that span reads VKTEMN. Catalysis depends on Tyr236, which acts as the Proton acceptor. Residues Cys263 and Cys305 are joined by a disulfide bond.

It belongs to the short-chain dehydrogenases/reductases (SDR) family.

It carries out the reaction (7S)-salutaridinol + NADP(+) = salutaridine + NADPH + H(+). Its pathway is alkaloid biosynthesis; morphine biosynthesis. Strong substrate inhibition. Was thought to be due to mutually exclusive productive and non-productive modes of substrate binding in the active site. Alternatively, SALR may undergo significant conformational changes during catalytic turnover. In terms of biological role, short-chain dehydrogenases/reductases involved in biosynthesis of morphinan-type benzylisoquinoline and opiate alkaloids natural products. Catalyzes specifically the stereospecific conversion of salutaridine to salutaridinol. The protein is Salutaridine reductase of Papaver somniferum (Opium poppy).